Here is a 427-residue protein sequence, read N- to C-terminus: MLDPKLLRNSLDEVAARLKTKRYDLDVDAFSQLEERRKSVQVRTEELQSERNSKSKNIGMMIKQGQDPQPLKDEVAKIGEQLETAKAELQDIQDKLDDLLQGIPNLPDASVPEGASEDDNVEVRQWGSVREFDFEPKDHVDLGESLGLLDFNSGAKLAGSRFVVMRRELARLHRALAQFMLDIHTTEHGYQETMTPFLVHAHALQGTGQLPKFEADLFKVPGEHDFYLIPTAEVPVTNLVREEILDAKELPLKMTSHTPCFRSEAGSYGRDVRGMIRQHQFEKVELIHVVAPEQSDAALEELTGNAERILQLLNLPYRVVALCGGDLGFSAAKTYDIEVWLPAQKKYREISSCSNCRDFQARRMQARWRNPETGKPELVHTLNGSGLAIGRTLIAVLENYQQADGSILVPDVLEPYMGGVKVIKSAN.

231-233 contributes to the L-serine binding site; it reads TAE. 262–264 serves as a coordination point for ATP; it reads RSE. Residue E285 participates in L-serine binding. 349–352 serves as a coordination point for ATP; the sequence is EISS. S385 lines the L-serine pocket.

It belongs to the class-II aminoacyl-tRNA synthetase family. Type-1 seryl-tRNA synthetase subfamily. As to quaternary structure, homodimer. The tRNA molecule binds across the dimer.

It localises to the cytoplasm. It carries out the reaction tRNA(Ser) + L-serine + ATP = L-seryl-tRNA(Ser) + AMP + diphosphate + H(+). The enzyme catalyses tRNA(Sec) + L-serine + ATP = L-seryl-tRNA(Sec) + AMP + diphosphate + H(+). It participates in aminoacyl-tRNA biosynthesis; selenocysteinyl-tRNA(Sec) biosynthesis; L-seryl-tRNA(Sec) from L-serine and tRNA(Sec): step 1/1. Functionally, catalyzes the attachment of serine to tRNA(Ser). Is also able to aminoacylate tRNA(Sec) with serine, to form the misacylated tRNA L-seryl-tRNA(Sec), which will be further converted into selenocysteinyl-tRNA(Sec). In Hahella chejuensis (strain KCTC 2396), this protein is Serine--tRNA ligase.